The chain runs to 285 residues: Urease accessory protein UreD 1 (285 aa).

It belongs to the UreD family. In terms of assembly, ureD, UreF and UreG form a complex that acts as a GTP-hydrolysis-dependent molecular chaperone, activating the urease apoprotein by helping to assemble the nickel containing metallocenter of UreC. The UreE protein probably delivers the nickel.

The protein localises to the cytoplasm. Its function is as follows. Required for maturation of urease via the functional incorporation of the urease nickel metallocenter. The sequence is that of Urease accessory protein UreD 1 from Pseudomonas syringae pv. syringae (strain B728a).